Here is a 546-residue protein sequence, read N- to C-terminus: NRAMP-like transporter smf-2 (546 aa).

At 1 to 42 (MPGFQNANISDLAPPAREKTFDDTIAVKIPEDEKNTWFSWRK) the chain is on the cytoplasmic side. A helical transmembrane segment spans residues 43-63 (LWAFTGPGFLMSIAYLDPGNI). Residues 64–70 (ESDLQAG) are Extracellular-facing. A helical membrane pass occupies residues 71 to 91 (AQAEYKLLWVLLVSHIVGMLL). Residues 92–119 (QRMSARLGVVSGKHMAEIAYDYYPLVPR) lie on the Cytoplasmic side of the membrane. Residues 120-140 (IILWLMIEIAIVCSDMQEVIG) form a helical membrane-spanning segment. Over 141 to 152 (TAIAIYLLSSGK) the chain is Extracellular. Residues 153-173 (IPLLVGVLITILDTFTFLFID) traverse the membrane as a helical segment. Residues 174–181 (RYGIRKLE) lie on the Cytoplasmic side of the membrane. The chain crosses the membrane as a helical span at residues 182-202 (FIFVALISTMAISFGYEFVVM). Residues 203–228 (KPVLTKVLTGTVVPWCSGCGKEEIIT) are Extracellular-facing. The chain crosses the membrane as a helical span at residues 229 to 249 (AISIFGAVIMPHNFYLHSALV). Residues 250–270 (KSRKVDRSSKTRIAEANKYFS) lie on the Cytoplasmic side of the membrane. Residues 271–291 (IESAFALSVSFFINLFVLSVF) form a helical membrane-spanning segment. Topologically, residues 292-334 (ARGLYQKTNGDVNSMCLSHNDIPDSNVFPNNTSSVTVDLFQGG) are extracellular. A glycan (N-linked (GlcNAc...) asparagine) is linked at Asn321. The helical transmembrane segment at 335 to 355 (IYLGCQFGLFAMIIWAIGIFA) threads the bilayer. The Cytoplasmic portion of the chain corresponds to 356 to 386 (AGQSSTMTGTYTGQFVMEGFVRISWPKWKRV). A helical membrane pass occupies residues 387–407 (LITRAVAITPTLILCIKAHGI). The Extracellular portion of the chain corresponds to 408–415 (KNLTGMND). N-linked (GlcNAc...) asparagine glycosylation occurs at Asn409. A helical membrane pass occupies residues 416–436 (FLNCVQMVQLPFALIPMITFT). The Cytoplasmic portion of the chain corresponds to 437–453 (SSKRIMHNFRTSKPLQY). A helical transmembrane segment spans residues 454–474 (FSIICGIITIGINVYFIFQYV). Over 475-483 (TENFGTGWL) the chain is Extracellular. A helical transmembrane segment spans residues 484–504 (IFVIIGPFTLLYIAFILYLAI). The Cytoplasmic portion of the chain corresponds to 505–546 (YCLVACELMNDTVNLPGFDFHRTLELDAPWITETFVVNDVYF).

This sequence belongs to the NRAMP family. As to expression, expressed in dopaminergic neurons (at protein level). Primarily expressed in mc1, mc2 and mc3 epithelial cells of the pharynx and vpil-6 pharyngeal-intestinal valve cells displaying an anterior-posterior expression gradient. Expressed in gonad sheath cells.

It is found in the apical cell membrane. The protein localises to the cytoplasmic vesicle membrane. Its function is as follows. Probable divalent metal ion transporter which regulates Mn(2+) uptake. The chain is NRAMP-like transporter smf-2 from Caenorhabditis elegans.